The following is a 256-amino-acid chain: Protein YABBY 4 (256 aa).

Residues 30–57 (CNCCDTILAVGVPCSSLFKTVTVRCGHC) form a C4-type zinc finger. Positions 127–168 (SCASNAPAMQMPPAKPVQQEPELPKNAPASANRPPEKRQRVP) are disordered.

It belongs to the YABBY family. In terms of tissue distribution, preferentially expressed in immature organs containing meristems and organ primordia. Expressed in phloem of developing vascular tissues of young seedling shoots. Expressed in the phloem of midvein vasculature of young leaves. Does not show polar expression pattern in leaf primordia.

It localises to the nucleus. Functionally, seems to be associated with phloem cell differentiation. In Oryza sativa subsp. japonica (Rice), this protein is Protein YABBY 4 (YAB4).